The sequence spans 377 residues: Chaperone protein DnaJ (377 aa).

The J domain occupies 5–69; it reads EYYDRLGVSK…QKRAAYDQYG (65 aa). Residues 133-215 form a CR-type zinc finger; it reads GTEKEVHYNR…CHGTGHEKQS (83 aa). Residues cysteine 146, cysteine 149, cysteine 163, cysteine 166, cysteine 189, cysteine 192, cysteine 203, and cysteine 206 each contribute to the Zn(2+) site. 4 CXXCXGXG motif repeats span residues 146–153, 163–170, 189–196, and 203–210; these read CHTCNGSG, CSKCHGSG, CDVCHGTG, and CPTCHGTG.

It belongs to the DnaJ family. As to quaternary structure, homodimer. Zn(2+) is required as a cofactor.

Its subcellular location is the cytoplasm. Its function is as follows. Participates actively in the response to hyperosmotic and heat shock by preventing the aggregation of stress-denatured proteins and by disaggregating proteins, also in an autonomous, DnaK-independent fashion. Unfolded proteins bind initially to DnaJ; upon interaction with the DnaJ-bound protein, DnaK hydrolyzes its bound ATP, resulting in the formation of a stable complex. GrpE releases ADP from DnaK; ATP binding to DnaK triggers the release of the substrate protein, thus completing the reaction cycle. Several rounds of ATP-dependent interactions between DnaJ, DnaK and GrpE are required for fully efficient folding. Also involved, together with DnaK and GrpE, in the DNA replication of plasmids through activation of initiation proteins. The polypeptide is Chaperone protein DnaJ (Streptococcus mutans serotype c (strain ATCC 700610 / UA159)).